We begin with the raw amino-acid sequence, 57 residues long: UPF0391 membrane protein RPA3029 (57 aa).

2 consecutive transmembrane segments (helical) span residues 6 to 26 (WALI…TGIS) and 35 to 55 (ILFY…FTIF).

This sequence belongs to the UPF0391 family.

It localises to the cell membrane. This chain is UPF0391 membrane protein RPA3029, found in Rhodopseudomonas palustris (strain ATCC BAA-98 / CGA009).